The following is a 328-amino-acid chain: Complex I intermediate-associated protein 30, mitochondrial (328 aa).

The N-terminal 24 residues, 1–24 (MSSIHKLLTGIYIHKNFLRPRAAL), are a transit peptide targeting the mitochondrion. Residues 44–54 (VTSVDRASQQG) show a composition bias toward polar residues. Positions 44-80 (VTSVDRASQQGKTEEGLQGHDHKEVALDAPSPDRTPE) are disordered. Residues 55 to 69 (KTEEGLQGHDHKEVA) are compositionally biased toward basic and acidic residues. A Phosphoserine modification is found at serine 319.

This sequence belongs to the CIA30 family. In terms of assembly, part of the mitochondrial complex I assembly/MCIA complex that comprises at least the core subunits TMEM126B, NDUFAF1, ECSIT and ACAD9 and complement subunits such as COA1 and TMEM186. Interacts with ECSIT. Interacts with ACAD9. At early stages of complex I assembly, it is found in intermediate subcomplexes that contain different subunits including NDUFB6, NDUFA6, NDUFA9, NDUFS3, NDUFS7, ND1, ND2 and ND3. Interacts with TMEM70 and TMEM242.

It is found in the mitochondrion. Its subcellular location is the mitochondrion matrix. Its function is as follows. As part of the MCIA complex, involved in the assembly of the mitochondrial complex I. This Mus musculus (Mouse) protein is Complex I intermediate-associated protein 30, mitochondrial.